The following is a 711-amino-acid chain: Polyribonucleotide nucleotidyltransferase (711 aa).

Mg(2+) is bound by residues Asp-486 and Asp-492. Residues 553–612 (PRIHTIKINPDKIKDVIGKGGSVIRALTEETGTTIEIEDDGTVKIAATDGEKAKHAIRRI) enclose the KH domain. The S1 motif domain occupies 622–690 (GRVYNGKVTR…RQGRIRLSIK (69 aa)). The disordered stretch occupies residues 689 to 711 (IKEATEQSQPAAAPEAPAAEQGE). Over residues 694–711 (EQSQPAAAPEAPAAEQGE) the composition is skewed to low complexity.

Belongs to the polyribonucleotide nucleotidyltransferase family. Component of the RNA degradosome, which is a multiprotein complex involved in RNA processing and mRNA degradation. Mg(2+) is required as a cofactor.

The protein resides in the cytoplasm. It catalyses the reaction RNA(n+1) + phosphate = RNA(n) + a ribonucleoside 5'-diphosphate. Its function is as follows. Involved in mRNA degradation. Catalyzes the phosphorolysis of single-stranded polyribonucleotides processively in the 3'- to 5'-direction. This chain is Polyribonucleotide nucleotidyltransferase, found in Escherichia coli O6:K15:H31 (strain 536 / UPEC).